The sequence spans 128 residues: Large ribosomal subunit protein bL12 (128 aa).

This sequence belongs to the bacterial ribosomal protein bL12 family. In terms of assembly, homodimer. Part of the ribosomal stalk of the 50S ribosomal subunit. Forms a multimeric L10(L12)X complex, where L10 forms an elongated spine to which 2 to 4 L12 dimers bind in a sequential fashion. Binds GTP-bound translation factors.

Forms part of the ribosomal stalk which helps the ribosome interact with GTP-bound translation factors. Is thus essential for accurate translation. The protein is Large ribosomal subunit protein bL12 of Acidithiobacillus ferrooxidans (strain ATCC 23270 / DSM 14882 / CIP 104768 / NCIMB 8455) (Ferrobacillus ferrooxidans (strain ATCC 23270)).